The chain runs to 108 residues: MGVEIETISPGDGRTFPKKGQTCVVHYTGMLQNGKKFDSSRDRNKPFKFRIGKQEVIKGFEEGAAQMSLGQRAKLTCTPDVAYGATGHPGVIPPNATLIFGVELLNLE.

Residues 20 to 108 (GQTCVVHYTG…IFGVELLNLE (89 aa)) enclose the PPIase FKBP-type domain.

The protein belongs to the FKBP-type PPIase family. FKBP1 subfamily. Identified in a complex composed of RYR2, FKBP1B, PKA catalytic subunit, PRKAR2A, AKAP6, and the protein phosphatases PP2A and PP1. Interacts directly with RYR2.

The protein localises to the cytoplasm. Its subcellular location is the sarcoplasmic reticulum. The catalysed reaction is [protein]-peptidylproline (omega=180) = [protein]-peptidylproline (omega=0). With respect to regulation, inhibited by both FK506 and rapamycin. In terms of biological role, has the potential to contribute to the immunosuppressive and toxic effects of FK506 and rapamycin. PPIases accelerate the folding of proteins. It catalyzes the cis-trans isomerization of proline imidic peptide bonds in oligopeptides. The sequence is that of Peptidyl-prolyl cis-trans isomerase FKBP1B (FKBP1B) from Oryctolagus cuniculus (Rabbit).